The chain runs to 659 residues: ATP-binding cassette sub-family D member 3 (659 aa).

Residues 2–61 (AAFSKYLTARNSSLAGAAFLLFCLLHKRRRALGLHGKKSGKPPLQNNEKEGKKERAVVDK) are interaction with PEX19. N-linked (GlcNAc...) asparagine glycosylation is present at asparagine 12. Lysine 61 is modified (N6-acetyllysine). A helical transmembrane segment spans residues 84–104 (GYLILIAVMLVSRTYCDVWMI). An ABC transmembrane type-1 domain is found at 85–372 (YLILIAVMLV…MLLRMSQALG (288 aa)). A glycan (N-linked (GlcNAc...) asparagine) is linked at asparagine 106. The helical transmembrane segment at 126–146 (LFNFIAAMPLISLVNNFLKYG) threads the bilayer. Asparagine 206 is a glycosylation site (N-linked (GlcNAc...) asparagine). Residues 224–244 (AIGAQGPASMMAYLLVSGLFL) form a helical membrane-spanning segment. Lysine 260 is modified (N6-acetyllysine). A helical transmembrane segment spans residues 313–333 (MGFIDSIIAKYIATVVGYLVV). Lysine 399 is modified (N6-acetyllysine). A Phosphoserine modification is found at serine 424. The ABC transporter domain maps to 434-659 (INADNIIKFD…ITEDTVEFGS (226 aa)). Position 473–480 (473–480 (GPNGCGKS)) interacts with ATP. The residue at position 533 (lysine 533) is an N6-acetyllysine. Position 659 is a phosphoserine (serine 659).

It belongs to the ABC transporter superfamily. ABCD family. Peroxisomal fatty acyl CoA transporter (TC 3.A.1.203) subfamily. In terms of assembly, homodimers. Can form heterodimers with ABCD1 and ABCD2. Dimerization is necessary to form an active transporter. Interacts with PEX19; mediates the targeting of ABCD3 to peroxisomes. Ubiquitinated by PEX2 during pexophagy in response to starvation, leading to its degradation.

The protein resides in the peroxisome membrane. The catalysed reaction is a very long-chain fatty acyl-CoA + H2O = a very long-chain fatty acid + CoA + H(+). The enzyme catalyses a very long-chain fatty acid(in) + ATP + H2O = a very long-chain fatty acid(out) + ADP + phosphate + H(+). It carries out the reaction a long-chain fatty acyl-CoA + H2O = a long-chain fatty acid + CoA + H(+). It catalyses the reaction a long-chain fatty acid(in) + ATP + H2O = a long-chain fatty acid(out) + ADP + phosphate + H(+). The catalysed reaction is pristanoyl-CoA + H2O = 2,6,10,14-tetramethylpentadecanoate + CoA + H(+). The enzyme catalyses 2,6,10,14-tetramethylpentadecanoate(in) + ATP + H2O = 2,6,10,14-tetramethylpentadecanoate(out) + ADP + phosphate + H(+). It carries out the reaction hexadecanedioyl-CoA + H2O = hexadecanedioate + CoA + H(+). It catalyses the reaction hexadecanedioate(in) + ATP + H2O = hexadecanedioate(out) + ADP + phosphate + H(+). The catalysed reaction is (5Z,8Z,11Z,14Z,17Z)-eicosapentaenoyl-CoA + H2O = (5Z,8Z,11Z,14Z,17Z)-eicosapentaenoate + CoA + H(+). The enzyme catalyses (5Z,8Z,11Z,14Z,17Z)-eicosapentaenoate(in) + ATP + H2O = (5Z,8Z,11Z,14Z,17Z)-eicosapentaenoate(out) + ADP + phosphate + H(+). It carries out the reaction (4Z,7Z,10Z,13Z,16Z,19Z)-docosahexaenoyl-CoA + H2O = (4Z,7Z,10Z,13Z,16Z,19Z)-docosahexaenoate + CoA + H(+). It catalyses the reaction (4Z,7Z,10Z,13Z,16Z,19Z)-docosahexaenoate(in) + ATP + H2O = (4Z,7Z,10Z,13Z,16Z,19Z)-docosahexaenoate(out) + ADP + phosphate + H(+). Broad substrate specificity ATP-dependent transporter of the ATP-binding cassette (ABC) family that catalyzes the transport of long-chain fatty acids (LCFA)-CoA, dicarboxylic acids-CoA, long-branched-chain fatty acids-CoA and bile acids from the cytosol to the peroxisome lumen for beta-oxydation. Has fatty acyl-CoA thioesterase and ATPase activities. Probably hydrolyzes fatty acyl-CoAs into free fatty acids prior to their ATP-dependent transport into peroxisomes. Thus, play a role in regulation of LCFAs and energy metabolism namely, in the degradation and biosynthesis of fatty acids by beta-oxidation. This chain is ATP-binding cassette sub-family D member 3 (Abcd3), found in Rattus norvegicus (Rat).